Reading from the N-terminus, the 119-residue chain is Beta-2-microglobulin (119 aa).

The first 20 residues, 1–20, serve as a signal peptide directing secretion; that stretch reads MARFVVVPLLVLVSLFGLEA. The Ig-like C1-type domain maps to 25–114; the sequence is PKIQVYSRYP…VTFSTPKTVK (90 aa). Residues Cys-45 and Cys-100 are joined by a disulfide bond.

This sequence belongs to the beta-2-microglobulin family. Heterodimer of an alpha chain and a beta chain. Beta-2-microglobulin is the beta-chain of major histocompatibility complex class I molecules.

The protein localises to the secreted. In terms of biological role, component of the class I major histocompatibility complex (MHC). Involved in the presentation of peptide antigens to the immune system. The chain is Beta-2-microglobulin (B2M) from Saguinus oedipus (Cotton-top tamarin).